A 546-amino-acid polypeptide reads, in one-letter code: MSDFKRRKLEGGKSAIDAARERKALKKASAPLKKSHAKPAPSNKPTAKRPPPPSPPQSQSEEDEDEFGGFSGEEEEDVSRAKMTNGSTAKADAEAEQSDEEAEAQAAAAVEAPKKTFADLGVREELCDACENLGYKTATPIQTESIPLALAGKDIIGLAETGSGKTAAFVLPILQALLDKPQAYFGLIMAPTRELAYQISQQVDALGSIINVKCATLVGGMDMVPQAIALSKRPHIIVASPGRLLDHLENTKGFSLKHLKYLVLDEADRLLDLDFGDSLDKIFKVLPRDDRHTYLFSATMSSKVESLQRAALKNPVRVSISSSSHQVVSTLLQSYMLIPHKYKDLYLIHLLNDNIGHATILFTRTVNETQRLAVLLRTLGFQALPLHGQLSQSNRLGALNKFKAKARDILVATDVAARGLDIPSVDLVVNFDLPHDSETYVHRVGRTARAGKSGKAVSFVTQYDLEIFQRIEHALGKQVPEEKVSRDEVMVYAERVGEAQRVAVREMKDLHDQRKSGRGGRGGGRGGGRGGRGRGGRRDNMDMDEG.

The disordered stretch occupies residues methionine 1–alanine 108. Composition is skewed to acidic residues over residues serine 60 to aspartate 77 and glutamate 94 to glutamate 103. The Q motif signature appears at lysine 115–threonine 143. The Helicase ATP-binding domain maps to isoleucine 146–valine 318. Alanine 159–threonine 166 is an ATP binding site. A DEAD box motif is present at residues aspartate 265–aspartate 268. Residues tyrosine 342 to methionine 490 enclose the Helicase C-terminal domain. Residues valine 504–lysine 515 are compositionally biased toward basic and acidic residues. The interval valine 504–glycine 546 is disordered. A compositionally biased stretch (gly residues) spans glycine 519–glycine 530. Basic and acidic residues predominate over residues glycine 536–glycine 546.

The protein belongs to the DEAD box helicase family. DDX47/RRP3 subfamily. As to quaternary structure, interacts with the SSU processome.

The protein localises to the nucleus. The enzyme catalyses ATP + H2O = ADP + phosphate + H(+). ATP-dependent rRNA helicase required for pre-ribosomal RNA processing. Involved in the maturation of the 35S-pre-rRNA and to its cleavage to mature 18S rRNA. This Phaeosphaeria nodorum (strain SN15 / ATCC MYA-4574 / FGSC 10173) (Glume blotch fungus) protein is ATP-dependent rRNA helicase RRP3.